A 170-amino-acid polypeptide reads, in one-letter code: Phosphopantetheine adenylyltransferase (170 aa).

Thr-14 contributes to the substrate binding site. Residues 14 to 15 (TF) and His-22 contribute to the ATP site. Residues Lys-46, Leu-78, and Arg-92 each coordinate substrate. ATP contacts are provided by residues 93–95 (GLR), Glu-103, and 128–134 (WLYISST).

Belongs to the bacterial CoaD family. As to quaternary structure, homohexamer. The cofactor is Mg(2+).

The protein resides in the cytoplasm. The catalysed reaction is (R)-4'-phosphopantetheine + ATP + H(+) = 3'-dephospho-CoA + diphosphate. The protein operates within cofactor biosynthesis; coenzyme A biosynthesis; CoA from (R)-pantothenate: step 4/5. Its function is as follows. Reversibly transfers an adenylyl group from ATP to 4'-phosphopantetheine, yielding dephospho-CoA (dPCoA) and pyrophosphate. This is Phosphopantetheine adenylyltransferase from Oleidesulfovibrio alaskensis (strain ATCC BAA-1058 / DSM 17464 / G20) (Desulfovibrio alaskensis).